Reading from the N-terminus, the 500-residue chain is Probable cytosol aminopeptidase (500 aa).

K261 and D266 together coordinate Mn(2+). K273 is a catalytic residue. Mn(2+)-binding residues include D284, D343, and E345. The active site involves R347.

It belongs to the peptidase M17 family. Requires Mn(2+) as cofactor.

It localises to the cytoplasm. The enzyme catalyses Release of an N-terminal amino acid, Xaa-|-Yaa-, in which Xaa is preferably Leu, but may be other amino acids including Pro although not Arg or Lys, and Yaa may be Pro. Amino acid amides and methyl esters are also readily hydrolyzed, but rates on arylamides are exceedingly low.. The catalysed reaction is Release of an N-terminal amino acid, preferentially leucine, but not glutamic or aspartic acids.. In terms of biological role, presumably involved in the processing and regular turnover of intracellular proteins. Catalyzes the removal of unsubstituted N-terminal amino acids from various peptides. The protein is Probable cytosol aminopeptidase of Wolbachia pipientis wMel.